The following is a 293-amino-acid chain: 4-hydroxy-tetrahydrodipicolinate synthase 1 (293 aa).

T46 serves as a coordination point for pyruvate. The active-site Proton donor/acceptor is Y134. Residue K162 is the Schiff-base intermediate with substrate of the active site. Residue I204 coordinates pyruvate.

Belongs to the DapA family. In terms of assembly, homotetramer; dimer of dimers.

Its subcellular location is the cytoplasm. It catalyses the reaction L-aspartate 4-semialdehyde + pyruvate = (2S,4S)-4-hydroxy-2,3,4,5-tetrahydrodipicolinate + H2O + H(+). It functions in the pathway amino-acid biosynthesis; L-lysine biosynthesis via DAP pathway; (S)-tetrahydrodipicolinate from L-aspartate: step 3/4. Functionally, catalyzes the condensation of (S)-aspartate-beta-semialdehyde [(S)-ASA] and pyruvate to 4-hydroxy-tetrahydrodipicolinate (HTPA). This is 4-hydroxy-tetrahydrodipicolinate synthase 1 from Clostridium acetobutylicum (strain ATCC 824 / DSM 792 / JCM 1419 / IAM 19013 / LMG 5710 / NBRC 13948 / NRRL B-527 / VKM B-1787 / 2291 / W).